Here is a 186-residue protein sequence, read N- to C-terminus: Probable chorismate pyruvate-lyase (186 aa).

R77, L115, and E174 together coordinate substrate.

It belongs to the UbiC family.

It is found in the cytoplasm. The catalysed reaction is chorismate = 4-hydroxybenzoate + pyruvate. Its pathway is cofactor biosynthesis; ubiquinone biosynthesis. Functionally, removes the pyruvyl group from chorismate, with concomitant aromatization of the ring, to provide 4-hydroxybenzoate (4HB) for the ubiquinone pathway. This is Probable chorismate pyruvate-lyase from Shewanella sp. (strain W3-18-1).